A 241-amino-acid chain; its full sequence is Uridylate kinase (241 aa).

Lys-15–Gly-18 contributes to the ATP binding site. Residues Gly-23 to Gly-28 are involved in allosteric activation by GTP. Gly-57 contributes to the UMP binding site. 2 residues coordinate ATP: Gly-58 and Arg-62. UMP contacts are provided by residues Asp-77 and Thr-138 to Thr-145. Residues Thr-165, Tyr-171, and Asp-174 each coordinate ATP.

It belongs to the UMP kinase family. In terms of assembly, homohexamer.

The protein resides in the cytoplasm. The catalysed reaction is UMP + ATP = UDP + ADP. It functions in the pathway pyrimidine metabolism; CTP biosynthesis via de novo pathway; UDP from UMP (UMPK route): step 1/1. With respect to regulation, allosterically activated by GTP. Inhibited by UTP. Catalyzes the reversible phosphorylation of UMP to UDP. This chain is Uridylate kinase, found in Shewanella amazonensis (strain ATCC BAA-1098 / SB2B).